The sequence spans 489 residues: Interferon gamma receptor 1 (489 aa).

Positions 1 to 17 (MALLFLLPLVMQGVSRA) are cleaved as a signal peptide. At 18–245 (EMGTADLGPS…ITIFNSSIKG (228 aa)) the chain is on the extracellular side. Asparagine 34, asparagine 79, and asparagine 86 each carry an N-linked (GlcNAc...) asparagine glycan. Cysteine 77 and cysteine 85 are disulfide-bonded. Cysteine 122 and cysteine 167 are oxidised to a cystine. A glycan (N-linked (GlcNAc...) asparagine) is linked at asparagine 179. Disulfide bonds link cysteine 195–cysteine 200 and cysteine 214–cysteine 235. Asparagine 240 carries an N-linked (GlcNAc...) asparagine glycan. A helical transmembrane segment spans residues 246-266 (SLWIPVVAALLLFLVLSLVFI). The Cytoplasmic portion of the chain corresponds to 267–489 (CFYIKKINPL…RPTEDSKEFS (223 aa)). The tract at residues 329-437 (ATVPGMHTED…SEFPPNNKGE (109 aa)) is disordered. Positions 335–348 (HTEDNPGKVEHTEE) are enriched in basic and acidic residues. Positions 349–360 (LSSITEVVTTEE) are enriched in polar residues. Serine 369 carries the post-translational modification Phosphoserine. The residue at position 372 (threonine 372) is a Phosphothreonine. At serine 378 the chain carries Phosphoserine. Positions 379 to 391 (SSPLSSNQSEPGS) are enriched in low complexity. A compositionally biased stretch (basic and acidic residues) spans 401–412 (NCSESDHSRNGF). Serine 403 carries the phosphoserine modification. The span at 415 to 429 (DSSCLESHSSLSDSE) shows a compositional bias: low complexity. Tyrosine 457 bears the Phosphotyrosine mark.

Belongs to the type II cytokine receptor family. Monomer. Heterodimer with IFNGR2, to form the IFNG receptor complex. Interacts with JAK1. Interacts (when phosphorylated) with STAT1. Interacts with SOCS1. In terms of processing, phosphorylated at Ser/Thr residues. Phosphorylation of Tyr-457 is required for IFNG receptor signal transduction. Influenza virus infection leads to phosphorylation in a CSNK1A1-dependent manner. Ubiquitinated after phosphorylation in a CSNK1A1-dependent manner, leading to the lysosome-dependent degradation. Proteasomally degraded through 'Lys-48'-mediated ubiquitination. Ubiquitination is necessary for efficient IFNGR1 signaling.

It is found in the cell membrane. Receptor subunit for interferon gamma/INFG that plays crucial roles in antimicrobial, antiviral, and antitumor responses by activating effector immune cells and enhancing antigen presentation. Associates with transmembrane accessory factor IFNGR2 to form a functional receptor. Upon ligand binding, the intracellular domain of IFNGR1 opens out to allow association of downstream signaling components JAK1 and JAK2. In turn, activated JAK1 phosphorylates IFNGR1 to form a docking site for STAT1. Subsequent phosphorylation of STAT1 leads to dimerization, translocation to the nucleus, and stimulation of target gene transcription. STAT3 can also be activated in a similar manner although activation seems weaker. IFNGR1 intracellular domain phosphorylation also provides a docking site for SOCS1 that regulates the JAK-STAT pathway by competing with STAT1 binding to IFNGR1. The sequence is that of Interferon gamma receptor 1 from Homo sapiens (Human).